Here is a 388-residue protein sequence, read N- to C-terminus: MALLRPHLHRFHSNTLRHSAYPSADAGGGLVVYPTYGRHRCSAIAIDAPSSLTGVTPIRWGYTSVQGFRDEMEDDIVIRSDAVDSFSYAAVFDGHAGSSSVKFLREELYKECVGALQAGSLLNGGDFAAIKEALIKAFESVDRNLLKWLEANGDEEDESGSTATVMIIRNDVSFIAHIGDSCAVLSRSGQIEELTDYHRPYGSSRAAIQEVKRVKEAGGWIVNGRICGDIAVSRAFGDIRFKTKKNDMLKKGVDEGRWSEKFVSRIEFKGDMVVATPDIFQVPLTSDVEFIILASDGLWDYMKSSDVVSYVRDQLRKHGNVQLACESLAQVALDRRSQDNISIIIADLGRTEWKNLPAQRQNVVVELVQAATTIGLVTVGIWMSSHLS.

In terms of domain architecture, PPM-type phosphatase spans 59–348; it reads RWGYTSVQGF…DNISIIIADL (290 aa). Mn(2+) contacts are provided by aspartate 93, glycine 94, aspartate 296, and aspartate 339. Residues 363–383 traverse the membrane as a helical segment; it reads VVVELVQAATTIGLVTVGIWM.

It belongs to the PP2C family. Requires Mg(2+) as cofactor. The cofactor is Mn(2+).

It is found in the membrane. The protein resides in the plastid. It localises to the chloroplast stroma. The enzyme catalyses O-phospho-L-seryl-[protein] + H2O = L-seryl-[protein] + phosphate. It catalyses the reaction O-phospho-L-threonyl-[protein] + H2O = L-threonyl-[protein] + phosphate. Its function is as follows. Protein phosphatase specifically required for efficient dephosphorylation of the light-harvesting complex II outer antennae (LCHII) and transition from state 2 to state 1. State transition plays a central role in response to environmental changes and allows to adjust to changing light conditions via the redistribution of light excitation energy between photosystem II (PSII) and photosystem I (PSI) in a short time by relocating LHCII proteins. Mainly responsible for the dephosphorylation of Lhcb1 and Lhcb2 but not of the photosystem II core proteins. This is Protein phosphatase 2C 57 from Arabidopsis thaliana (Mouse-ear cress).